The chain runs to 831 residues: Isethionate sulfite-lyase (831 aa).

One can recognise a PFL domain in the interval 32–701; that stretch reads PRVFRLLERF…VVSATPNGRT (670 aa). 2-hydroxyethane-1-sulfonate-binding positions include Arg-189, Gln-193, 468-470, and Arg-679; that span reads CTE. Residue Cys-468 is the Cysteine radical intermediate of the active site. The active-site Proton acceptor is Glu-470. Residues 708 to 831 form the Glycine radical domain; sequence DGSSASHGAD…LIARTEHDVM (124 aa). Residue Gly-806 is modified to Glycine radical.

The protein belongs to the glycyl radical enzyme (GRE) family. In terms of assembly, homodimer. In terms of processing, requires the activating protein IslB to generate the key active site glycyl radical on Gly-806 that is involved in catalysis.

The catalysed reaction is 2-hydroxyethane-1-sulfonate = acetaldehyde + sulfite + H(+). It functions in the pathway organosulfur degradation; alkanesulfonate degradation. Its function is as follows. Involved in an anaerobic respiration pathway that converts the sulfonate isethionate (2-hydroxyethanesulfonate) to ammonia, acetate and sulfide. Catalyzes the radical-mediated C-S bond cleavage of isethionate (2-hydroxyethanesulfonate) to form sulfite and acetaldehyde. The polypeptide is Isethionate sulfite-lyase (Desulfovibrio desulfuricans (strain ATCC 27774 / DSM 6949 / MB)).